We begin with the raw amino-acid sequence, 257 residues long: UPF0246 protein Lcho_2652 (257 aa).

The protein belongs to the UPF0246 family.

This chain is UPF0246 protein Lcho_2652, found in Leptothrix cholodnii (strain ATCC 51168 / LMG 8142 / SP-6) (Leptothrix discophora (strain SP-6)).